The following is a 522-amino-acid chain: Peptide chain release factor 3 (522 aa).

Positions 10 to 277 constitute a tr-type G domain; the sequence is ASRKTFAIIS…TFVDFAPAPS (268 aa). GTP contacts are provided by residues 19–26, 87–91, and 141–144; these read SHPDAGKT, DTPGH, and NKMD.

This sequence belongs to the TRAFAC class translation factor GTPase superfamily. Classic translation factor GTPase family. PrfC subfamily.

The protein resides in the cytoplasm. Its function is as follows. Increases the formation of ribosomal termination complexes and stimulates activities of RF-1 and RF-2. It binds guanine nucleotides and has strong preference for UGA stop codons. It may interact directly with the ribosome. The stimulation of RF-1 and RF-2 is significantly reduced by GTP and GDP, but not by GMP. The protein is Peptide chain release factor 3 of Listeria welshimeri serovar 6b (strain ATCC 35897 / DSM 20650 / CCUG 15529 / CIP 8149 / NCTC 11857 / SLCC 5334 / V8).